A 442-amino-acid polypeptide reads, in one-letter code: MSLNDFLQTLSNAVGEKNSNTLEKCIILDPSEPSFQQLSKTLFLDRKGKNKLNGTIQKEFGRIRGWKELVTTYFEYVENAASSPDQRKWELLQNLYSNLTTCFSHIDGAWLCTIVKRVSKLYVKLSLQLDTSTPTLEDSFDGNGFIQRKYVSDASRNVLRTFNSILSDRQQNINPSKKDAIFCIANLLCLLYFRLKQIRLCQTIQANVISSGADISRATMAELVTFRYYLGRCHLYQRKIHQAKDHLLFSFLQCPDECYHQKRLSLIYLTTCLLILGKSPTKGLLEKYKLTAAFEPLIKALKSGDIKSFRLSLEDNSRRKWFIKRGIYLTLLDRCEIILWRNLFRKVFLFTFEQSQKTPHVSGSYLLTAARLSTNDNSYDMDDVECICVSLIDQGYIKGYIIHASSTLVLKKDPSFGFSVIESLMPIARNDHAEKEFFHANA.

Residues Val224–Ser415 enclose the PCI domain.

Its subcellular location is the cytoplasm. The protein resides in the nucleus envelope. The protein is PCI domain-containing protein C1105.07c of Schizosaccharomyces pombe (strain 972 / ATCC 24843) (Fission yeast).